Here is a 428-residue protein sequence, read N- to C-terminus: Peptidase B (428 aa).

The Mn(2+) site is built by K195 and D200. Residue K207 is part of the active site. Mn(2+) is bound by residues D218, D277, and E279. R281 is an active-site residue.

This sequence belongs to the peptidase M17 family. As to quaternary structure, homohexamer. The cofactor is Mn(2+).

The protein localises to the cytoplasm. It catalyses the reaction Release of an N-terminal amino acid, Xaa, from a peptide or arylamide. Xaa is preferably Glu or Asp but may be other amino acids, including Leu, Met, His, Cys and Gln.. Functionally, probably plays an important role in intracellular peptide degradation. The protein is Peptidase B of Enterobacter sp. (strain 638).